The chain runs to 587 residues: 2-succinyl-5-enolpyruvyl-6-hydroxy-3-cyclohexene-1-carboxylate synthase (587 aa).

This sequence belongs to the TPP enzyme family. MenD subfamily. Homodimer. Mg(2+) serves as cofactor. It depends on Mn(2+) as a cofactor. Thiamine diphosphate is required as a cofactor.

It carries out the reaction isochorismate + 2-oxoglutarate + H(+) = 5-enolpyruvoyl-6-hydroxy-2-succinyl-cyclohex-3-ene-1-carboxylate + CO2. It functions in the pathway quinol/quinone metabolism; 1,4-dihydroxy-2-naphthoate biosynthesis; 1,4-dihydroxy-2-naphthoate from chorismate: step 2/7. The protein operates within quinol/quinone metabolism; menaquinone biosynthesis. In terms of biological role, catalyzes the thiamine diphosphate-dependent decarboxylation of 2-oxoglutarate and the subsequent addition of the resulting succinic semialdehyde-thiamine pyrophosphate anion to isochorismate to yield 2-succinyl-5-enolpyruvyl-6-hydroxy-3-cyclohexene-1-carboxylate (SEPHCHC). The chain is 2-succinyl-5-enolpyruvyl-6-hydroxy-3-cyclohexene-1-carboxylate synthase from Chloroflexus aurantiacus (strain ATCC 29366 / DSM 635 / J-10-fl).